The following is a 333-amino-acid chain: Glycogenin-1 (333 aa).

Residue Thr-2 is modified to N-acetylthreonine. UDP contacts are provided by Leu-9, Thr-11, Asn-12, and Tyr-15. 4 residues coordinate UDP-alpha-D-glucose: Leu-9, Thr-11, Asn-12, and Tyr-15. Position 44 is a phosphoserine; by PKA; in vitro (Ser-44). Arg-77 is a UDP binding site. Arg-77, Lys-86, Asp-102, Ala-103, Asp-104, Asn-133, Ser-134, Asp-160, Asp-163, and Gln-164 together coordinate UDP-alpha-D-glucose. Residues Asp-102, Ala-103, and Asp-104 each contribute to the UDP site. Residue Asp-102 coordinates Mn(2+). Residue Asp-104 participates in Mn(2+) binding. Tyr-195 carries O-linked (Glc...) tyrosine glycosylation. UDP contacts are provided by His-212, Gly-215, and Lys-218. Residue His-212 coordinates Mn(2+). 2 residues coordinate UDP-alpha-D-glucose: Gly-215 and Lys-218. The interaction with GYS1 stretch occupies residues 284–316 (SHLSLGETPATTQPFVSSEERKERWEQGQADYM).

This sequence belongs to the glycosyltransferase 8 family. Glycogenin subfamily. Part of the GYS1-GYG1 complex, a heterooctamer composed of a tetramer of GYS1 and 2 dimers of GYG1, where each GYS1 protomer binds to one GYG1 subunit (via GYG1 C-terminus); the GYS1 tetramer may dissociate from GYG1 dimers to continue glycogen polymerization on its own. May also form a heterooctamer complex with GYS2 (via GYG1 C-terminus). The cofactor is Mn(2+). Post-translationally, self-glycosylated by the transfer of glucose residues from UDP-glucose to itself, forming an alpha-1,4-glycan of around 10 residues attached to Tyr-195. Phosphorylated. Detected in heart, skeletal muscle, brain and testis, and at lower levels in kidney.

The protein resides in the cytoplasm. The protein localises to the nucleus. It carries out the reaction L-tyrosyl-[glycogenin] + UDP-alpha-D-glucose = alpha-D-glucosyl-L-tyrosyl-[glycogenin] + UDP + H(+). It catalyses the reaction [1,4-alpha-D-glucosyl](n)-L-tyrosyl-[glycogenin] + UDP-alpha-D-glucose = [1,4-alpha-D-glucosyl](n+1)-L-tyrosyl-[glycogenin] + UDP + H(+). It participates in glycan biosynthesis; glycogen biosynthesis. Functionally, glycogenin participates in the glycogen biosynthetic process along with glycogen synthase and glycogen branching enzyme. It catalyzes the formation of a short alpha (1,4)-glucosyl chain covalently attached via a glucose 1-O-tyrosyl linkage to internal tyrosine residues and these chains act as primers for the elongation reaction catalyzed by glycogen synthase. The protein is Glycogenin-1 (GYG1) of Oryctolagus cuniculus (Rabbit).